We begin with the raw amino-acid sequence, 37 residues long: Large ribosomal subunit protein bL36A (37 aa).

It belongs to the bacterial ribosomal protein bL36 family.

The polypeptide is Large ribosomal subunit protein bL36A (Actinobacillus pleuropneumoniae serotype 5b (strain L20)).